Here is a 204-residue protein sequence, read N- to C-terminus: Ras-related and estrogen-regulated growth inhibitor-like protein (204 aa).

Residues 1-204 are small GTPase-like; that stretch reads MNDVKLTVLG…NVFGKRRKSV (204 aa). GTP contacts are provided by residues 10–17, 57–63, and 122–125; these read GGEGTGKS, DPCSQPQ, and NKQD.

The protein belongs to the small GTPase superfamily. Ras family.

It carries out the reaction GTP + H2O = GDP + phosphate + H(+). Its function is as follows. Binds GDP/GTP and may possess intrinsic GTPase activity. In Bos taurus (Bovine), this protein is Ras-related and estrogen-regulated growth inhibitor-like protein (RERGL).